The primary structure comprises 328 residues: DNA-directed RNA polymerase subunit alpha (328 aa).

Residues 1 to 230 (MSNHGLQMPE…DHVSFFIQLE (230 aa)) are alpha N-terminal domain (alpha-NTD). The tract at residues 248 to 328 (RIRELLAQPV…EEYLEEKKAS (81 aa)) is alpha C-terminal domain (alpha-CTD).

The protein belongs to the RNA polymerase alpha chain family. Homodimer. The RNAP catalytic core consists of 2 alpha, 1 beta, 1 beta' and 1 omega subunit. When a sigma factor is associated with the core the holoenzyme is formed, which can initiate transcription.

The catalysed reaction is RNA(n) + a ribonucleoside 5'-triphosphate = RNA(n+1) + diphosphate. Functionally, DNA-dependent RNA polymerase catalyzes the transcription of DNA into RNA using the four ribonucleoside triphosphates as substrates. In Salinibacter ruber (strain DSM 13855 / M31), this protein is DNA-directed RNA polymerase subunit alpha.